The following is a 667-amino-acid chain: Heat shock protein DDB_G0283913 (667 aa).

A run of 2 helical transmembrane segments spans residues 2–22 (FVGT…KKIL) and 224–244 (MFIC…LNEL). Residues 18–82 (IKKILKRKKE…ELAKKLNCYI (65 aa)) adopt a coiled-coil conformation. Positions 432 to 478 (IDDTIQDNDKSGSEVSTPTISSSSSSPLQPIIKDEKDDNIENKSDEA) are disordered. The segment covering 444–457 (SEVSTPTISSSSSS) has biased composition (low complexity). The span at 463-477 (IKDEKDDNIENKSDE) shows a compositional bias: basic and acidic residues. The sHSP domain maps to 551–667 (MVFSSGFKPF…VITFKFEKIG (117 aa)).

This sequence belongs to the small heat shock protein (HSP20) family.

The protein localises to the membrane. This Dictyostelium discoideum (Social amoeba) protein is Heat shock protein DDB_G0283913.